Reading from the N-terminus, the 515-residue chain is SWI/SNF-related matrix-associated actin-dependent regulator of chromatin subfamily D member 1 (515 aa).

Residues 1-103 (MAARAGFQSV…SGMDQSRKRP (103 aa)) form a disordered region. Over residues 14 to 23 (GGAGASGGAG) the composition is skewed to gly residues. An interaction with ESR1, NR1H4, NR3C1, PGR and SMARCA4 region spans residues 43 to 167 (APGQGLYRSP…DQTIMRKRLD (125 aa)). Arginine 68 and arginine 88 each carry asymmetric dimethylarginine. Residue lysine 101 forms a Glycyl lysine isopeptide (Lys-Gly) (interchain with G-Cter in SUMO2) linkage. Residues 168 to 474 (IQEALKRPIK…TMTDVVGNPE (307 aa)) are interaction with SMARCC1 and SMARCC2. Positions 180–515 (RKLRIFISNT…LEQALGIRNT (336 aa)) are necessary for GR/NR3C1-mediated remodeling and transcription from chromatin; required for GR/NR3C1 interaction with the BRG1/SMARCA4 complex in vivo. Threonine 203 carries the post-translational modification Phosphothreonine. An N6-acetyllysine modification is found at lysine 223. The region spanning 290 to 367 (YQPPQFKLDP…PQRLHALLMP (78 aa)) is the SWIB/MDM2 domain. Residues 412 to 440 (ASQQEIATLDNKIHETIETINQLKTQREF) adopt a coiled-coil conformation.

It belongs to the SMARCD family. As to quaternary structure, component of the multiprotein chromatin-remodeling complexes SWI/SNF: SWI/SNF-A (BAF), SWI/SNF-B (PBAF) and related complexes. The canonical complex contains a catalytic subunit (either SMARCA4/BRG1/BAF190A or SMARCA2/BRM/BAF190B), and at least SMARCE1, ACTL6A/BAF53, SMARCC1/BAF155, SMARCC2/BAF170, and SMARCB1/SNF5/BAF47. Other subunits specific to each of the complexes may also be present permitting several possible combinations developmentally and tissue specific. Component of the BAF complex, which includes at least actin (ACTB), ARID1A/BAF250A, ARID1B/BAF250B, SMARCA2/BRM, SMARCA4/BRG1/BAF190A, ACTL6A/BAF53, ACTL6B/BAF53B, SMARCE1/BAF57, SMARCC1/BAF155, SMARCC2/BAF170, SMARCB1/SNF5/INI1, and one or more SMARCD1/BAF60A, SMARCD2/BAF60B, or SMARCD3/BAF60C. In muscle cells, the BAF complex also contains DPF3. Component of neural progenitors-specific chromatin remodeling complex (npBAF complex) composed of at least, ARID1A/BAF250A or ARID1B/BAF250B, SMARCD1/BAF60A, SMARCD3/BAF60C, SMARCA2/BRM/BAF190B, SMARCA4/BRG1/BAF190A, SMARCB1/BAF47, SMARCC1/BAF155, SMARCE1/BAF57, SMARCC2/BAF170, PHF10/BAF45A, ACTL6A/BAF53A and actin. Component of neuron-specific chromatin remodeling complex (nBAF complex) composed of at least, ARID1A/BAF250A or ARID1B/BAF250B, SMARCD1/BAF60A, SMARCD3/BAF60C, SMARCA2/BRM/BAF190B, SMARCA4/BRG1/BAF190A, SMARCB1/BAF47, SMARCC1/BAF155, SMARCE1/BAF57, SMARCC2/BAF170, DPF1/BAF45B, DPF3/BAF45C, ACTL6B/BAF53B and actin. Component of the SWI/SNF-B (PBAF) chromatin remodeling complex, at least composed of SMARCA4/BRG1, SMARCB1/BAF47/SNF5, ACTL6A/BAF53A or ACTL6B/BAF53B, SMARCE1/BAF57, SMARCD1/BAF60A, SMARCD2/BAF60B, perhaps SMARCD3/BAF60C, SMARCC1/BAF155, SMARCC2/BAF170, PBRM1/BAF180, ARID2/BAF200 and actin (ACTB). Component of SWI/SNF (GBAF) subcomplex, which includes at least BICRA or BICRAL (mutually exclusive), BRD9, SS18, SMARCA2/BRM, SMARCA4/BRG1/BAF190A, ACTL6A/BAF53, SMARCC1/BAF155, and SMARCD1/BAF60A. Specifically interacts with the VDR heterodimer complex. Interacts with ESR1, NR3C1, NR1H4, PGR, SMARCA4, SMARCC1 and SMARCC2. Interacts with DPF2. Interacts with DPF3a (isoform 2 of DPF3/BAF45C) and with HDGFL2 in a DPF3a-dependent manner. Interacts with FOS, FOSB isoform 1 and 2, FOSL1 and FOSL2. Expressed in all tissues tested, including brain, heart, kidney, liver, lung, muscle, pancreas and placenta.

Its subcellular location is the nucleus. Its function is as follows. Involved in transcriptional activation and repression of select genes by chromatin remodeling (alteration of DNA-nucleosome topology). Component of SWI/SNF chromatin remodeling complexes that carry out key enzymatic activities, changing chromatin structure by altering DNA-histone contacts within a nucleosome in an ATP-dependent manner. Belongs to the neural progenitors-specific chromatin remodeling complex (npBAF complex) and the neuron-specific chromatin remodeling complex (nBAF complex). During neural development a switch from a stem/progenitor to a postmitotic chromatin remodeling mechanism occurs as neurons exit the cell cycle and become committed to their adult state. The transition from proliferating neural stem/progenitor cells to postmitotic neurons requires a switch in subunit composition of the npBAF and nBAF complexes. As neural progenitors exit mitosis and differentiate into neurons, npBAF complexes which contain ACTL6A/BAF53A and PHF10/BAF45A, are exchanged for homologous alternative ACTL6B/BAF53B and DPF1/BAF45B or DPF3/BAF45C subunits in neuron-specific complexes (nBAF). The npBAF complex is essential for the self-renewal/proliferative capacity of the multipotent neural stem cells. The nBAF complex along with CREST plays a role regulating the activity of genes essential for dendrite growth. Has a strong influence on vitamin D-mediated transcriptional activity from an enhancer vitamin D receptor element (VDRE). May be a link between mammalian SWI-SNF-like chromatin remodeling complexes and the vitamin D receptor (VDR) heterodimer. Mediates critical interactions between nuclear receptors and the BRG1/SMARCA4 chromatin-remodeling complex for transactivation. Interacts with AKIRIN2. This Homo sapiens (Human) protein is SWI/SNF-related matrix-associated actin-dependent regulator of chromatin subfamily D member 1.